Reading from the N-terminus, the 384-residue chain is Glycerol 3-phosphate oxidase (384 aa).

Positions 1 to 15 (METRDVLIVGGGVIG) are cleaved as a signal peptide. Ile-14 provides a ligand contact to FAD. A lipid anchor (N-palmitoyl cysteine) is attached at Cys-16. Cys-16 is lipidated: S-diacylglycerol cysteine. Residues Glu-33, 42–43 (TS), and 47–49 (SGV) each bind FAD. Residues Ser-47 and His-51 each coordinate sn-glycerol 3-phosphate. His-51 serves as the catalytic Proton acceptor. Val-177 provides a ligand contact to FAD. Sn-glycerol 3-phosphate is bound by residues Lys-258 and Arg-320. 346-347 (MK) provides a ligand contact to FAD. Ser-348 provides a ligand contact to sn-glycerol 3-phosphate. Thr-352 contacts FAD.

As to quaternary structure, monomer. It depends on FAD as a cofactor.

Its subcellular location is the cytoplasm. It localises to the cell membrane. The enzyme catalyses sn-glycerol 3-phosphate + O2 = dihydroxyacetone phosphate + H2O2. The protein operates within polyol metabolism; glycerol degradation via glycerol kinase pathway; glycerone phosphate from sn-glycerol 3-phosphate (aerobic route): step 1/1. Its function is as follows. Catalyzes the oxidation of glycerol 3-phosphate to dihydroxyacetone phosphate (DHAP), with a reduction of O2 to H2O2. The formation of hydrogen peroxide by this enzyme is crucial for cytotoxic effects of M.pneumoniae on host cells. Is involved in the metabolism of glycerol and is essential for glycerol utilization; glycerol is one of the few carbon sources that can be utilized by M.pneumoniae for growth. To a lesser extent, is also able to use glyceraldehyde 3-phosphate (GAP), an intermediate in the glycolysis pathway, as a substrate (but the structure of the product has not been elucidated). Therefore, in the absence of glycerol, GAP may serve as a substrate in the GlpO reaction to supply H2O2 during mycoplasma infection. Does not show any dehydrogenase activity with NAD(+). The polypeptide is Glycerol 3-phosphate oxidase (Mycoplasma pneumoniae (strain ATCC 29342 / M129 / Subtype 1) (Mycoplasmoides pneumoniae)).